The following is a 447-amino-acid chain: Chordin-like protein 1 (447 aa).

Positions 1–22 (MDGMKYIISLFFIFVFLEGSKT) are cleaved as a signal peptide. VWFC domains lie at 30-95 (TYCV…PRCP) and 108-174 (KSCE…RVCR). N-linked (GlcNAc...) asparagine glycosylation is present at Asn-113. A Cell attachment site motif is present at residues 174–176 (RGD). Residues 200–224 (SYLRSPYDPPPNRQAGGLPRFPGSR) form a disordered region. Positions 253–318 (QVCVSNGKTY…IDGKCCKVCP (66 aa)) constitute a VWFC 3 domain. Asn-286 carries an N-linked (GlcNAc...) asparagine glycan.

In terms of processing, may be glycosylated. Expressed in heart, brain, lung, liver, kidney and testis.

The protein localises to the secreted. In terms of biological role, seems to antagonize the function of BMP4 by binding to it and preventing its interaction with receptors. Alters the fate commitment of neural stem cells from gliogenesis to neurogenesis. Contributes to neuronal differentiation of neural stem cells in the brain by preventing the adoption of a glial fate. May play a crucial role in dorsoventral axis formation. Antagonizes the function of BMP7 and may thus play an important role in the embryonic bone formation. Shows no inhibitory effect on the inducing activity of BMP2. Plays a role during anterior segment eye development. This Mus musculus (Mouse) protein is Chordin-like protein 1 (Chrdl1).